Reading from the N-terminus, the 360-residue chain is MKTSMQRKLDQLTTRLAELNDLLSREDITSNLDQYRKLTREHAELGPVVDHYALWRQAMNDATTAQELLADASMRDFAEDEIRAARERMEKLGAELQKMLLPKDPNDDRNIFLEIRAGTGGDESALFAGDLLRMYLRFAERNRWQVEMMSASESDLGGYKEVIVRIAGEAAYSKLKFESGGHRVQRVPATETQGRIHTSACTVAVMPEADEIGEVEINPADLRIDTFRASGAGGQHINKTDSAVRVTHLPTGIVVECQDDRSQHKNKDRALKVLAARIKDKQSHEQQAKEAATRKSLIGSGDRSERIRTYNFPQGRLTDHRINLTLYRLDAIMDGDLDELIAALVSEHQAELLASLGDAD.

The residue at position 235 (Gln-235) is an N5-methylglutamine. Residues 280-293 (DKQSHEQQAKEAAT) show a composition bias toward basic and acidic residues. The disordered stretch occupies residues 280–300 (DKQSHEQQAKEAATRKSLIGS).

Belongs to the prokaryotic/mitochondrial release factor family. Methylated by PrmC. Methylation increases the termination efficiency of RF1.

It is found in the cytoplasm. Peptide chain release factor 1 directs the termination of translation in response to the peptide chain termination codons UAG and UAA. The sequence is that of Peptide chain release factor 1 from Paraburkholderia phytofirmans (strain DSM 17436 / LMG 22146 / PsJN) (Burkholderia phytofirmans).